A 171-amino-acid chain; its full sequence is Peptide deformylase (171 aa).

Residues Cys-94 and His-136 each contribute to the Fe cation site. Glu-137 is an active-site residue. A Fe cation-binding site is contributed by His-140.

The protein belongs to the polypeptide deformylase family. Requires Fe(2+) as cofactor.

It carries out the reaction N-terminal N-formyl-L-methionyl-[peptide] + H2O = N-terminal L-methionyl-[peptide] + formate. Its function is as follows. Removes the formyl group from the N-terminal Met of newly synthesized proteins. Requires at least a dipeptide for an efficient rate of reaction. N-terminal L-methionine is a prerequisite for activity but the enzyme has broad specificity at other positions. This chain is Peptide deformylase, found in Afipia carboxidovorans (strain ATCC 49405 / DSM 1227 / KCTC 32145 / OM5) (Oligotropha carboxidovorans).